The primary structure comprises 860 residues: DNA mismatch repair protein MutS (860 aa).

621–628 lines the ATP pocket; that stretch reads GPNMGGKS.

It belongs to the DNA mismatch repair MutS family.

Functionally, this protein is involved in the repair of mismatches in DNA. It is possible that it carries out the mismatch recognition step. This protein has a weak ATPase activity. The sequence is that of DNA mismatch repair protein MutS from Salmonella arizonae (strain ATCC BAA-731 / CDC346-86 / RSK2980).